The sequence spans 438 residues: Serine hydroxymethyltransferase 1 (438 aa).

Residues Leu-130 and 134–136 each bind (6S)-5,6,7,8-tetrahydrofolate; that span reads GHL. Residue Lys-239 is modified to N6-(pyridoxal phosphate)lysine.

This sequence belongs to the SHMT family. Homodimer. The cofactor is pyridoxal 5'-phosphate.

It localises to the cytoplasm. It catalyses the reaction (6R)-5,10-methylene-5,6,7,8-tetrahydrofolate + glycine + H2O = (6S)-5,6,7,8-tetrahydrofolate + L-serine. It functions in the pathway one-carbon metabolism; tetrahydrofolate interconversion. The protein operates within amino-acid biosynthesis; glycine biosynthesis; glycine from L-serine: step 1/1. Functionally, catalyzes the reversible interconversion of serine and glycine with tetrahydrofolate (THF) serving as the one-carbon carrier. This reaction serves as the major source of one-carbon groups required for the biosynthesis of purines, thymidylate, methionine, and other important biomolecules. Also exhibits THF-independent aldolase activity toward beta-hydroxyamino acids, producing glycine and aldehydes, via a retro-aldol mechanism. The sequence is that of Serine hydroxymethyltransferase 1 from Mycobacterium tuberculosis (strain CDC 1551 / Oshkosh).